Reading from the N-terminus, the 360-residue chain is Mitogen-activated protein kinase 1 (360 aa).

Ala-2 carries the N-acetylalanine modification. The Protein kinase domain occupies 25–313; sequence YTNLSYIGEG…VEQALAHPYL (289 aa). Phosphoserine; by SGK1 is present on Ser-29. Residues 31 to 39 and Lys-54 each bind ATP; that span reads IGEGAYGMV. Catalysis depends on Asp-149, which acts as the Proton acceptor. A Phosphothreonine; by MAP2K1 and MAP2K2 modification is found at Thr-185. The TXY signature appears at 185–187; the sequence is TEY. A Phosphotyrosine; by MAP2K1 and MAP2K2 modification is found at Tyr-187. Thr-190 is subject to Phosphothreonine; by autocatalysis. Phosphoserine is present on residues Ser-246, Ser-248, and Ser-284.

Belongs to the protein kinase superfamily. CMGC Ser/Thr protein kinase family. MAP kinase subfamily. As to quaternary structure, binds both upstream activators and downstream substrates in multimolecular complexes. Interacts with ADAM15, ARHGEF2, ARRB2, DAPK1 (via death domain), HSF4, IER3, IPO7, MKNK2, MORG1, NISCH, PEA15, SGK1, and isoform 1 of NEK2. Interacts (via phosphorylated form) with TPR (via C-terminal region and phosphorylated form); the interaction requires dimerization of MAPK1/ERK2 and increases following EGF stimulation. Interacts with MAP2K1. Interacts with DUSP6. Interacts (phosphorylated form) with CAV2 ('Tyr-19'-phosphorylated form); the interaction, promoted by insulin, leads to nuclear location and MAPK1 activation. MKNK2 isoform 1 binding prevents from dephosphorylation and inactivation. Interacts with DCC. The phosphorylated form interacts with PML. Interacts with STYX. Interacts with CDK2AP2. Interacts with CAVIN4. Interacts with DUSP7; the interaction enhances DUSP7 phosphatase activity. Interacts with GIT1; this interaction is necessary for MAPK1 localization to focal adhesions. Interacts with ZNF263. Interacts with phosphoglycerate kinase PGK1; the interaction is direct, occurs under hypoxic conditions, and promotes interaction between PGK1 and PIN1. Mg(2+) serves as cofactor. Post-translationally, dually phosphorylated on Thr-185 and Tyr-187, which activates the enzyme. Phosphorylated upon FLT3 and KIT signaling. Phosphorylation on Ser-29 by SGK1 results in its activation by enhancing its interaction with MAP2K1/MEK1 and MAP2K2/MEK2. Phosphorylation at Ser-246 and Ser-248 as well as autophosphorylation at Thr-190 promote nuclear localization. Ligand-activated ALK induces tyrosine phosphorylation. Dephosphorylated by PTPRJ at Tyr-187. Dephosphorylated by DUSP1 and DUSP2 at Thr-185 and Tyr-187. ISGylated. In terms of processing, ubiquitinated by TRIM15 via 'Lys-63'-linked ubiquitination; leading to activation. Deubiquitinated by CYLD.

Its subcellular location is the nucleus. The protein localises to the cytoplasm. It localises to the cytoskeleton. The protein resides in the microtubule organizing center. It is found in the centrosome. Its subcellular location is the spindle. The protein localises to the membrane. It localises to the caveola. The protein resides in the cell junction. It is found in the focal adhesion. It catalyses the reaction L-seryl-[protein] + ATP = O-phospho-L-seryl-[protein] + ADP + H(+). It carries out the reaction L-threonyl-[protein] + ATP = O-phospho-L-threonyl-[protein] + ADP + H(+). With respect to regulation, phosphorylated by MAP2K1/MEK1 and MAP2K2/MEK2 on Thr-185 and Tyr-187 in response to external stimuli like insulin or NGF. Both phosphorylations are required for activity. This phosphorylation causes dramatic conformational changes, which enable full activation and interaction of MAPK1/ERK2 with its substrates. Phosphorylation on Ser-29 by SGK1 results in its activation by enhancing its interaction with MAP2K1/MEK1 and MAP2K2/MEK2. Dephosphorylated and inactivated by DUSP1, DUSP3, DUSP6 and DUSP9. Inactivated by pyrimidylpyrrole inhibitors. Its function is as follows. Serine/threonine kinase which acts as an essential component of the MAP kinase signal transduction pathway. MAPK1/ERK2 and MAPK3/ERK1 are the 2 MAPKs which play an important role in the MAPK/ERK cascade. They participate also in a signaling cascade initiated by activated KIT and KITLG/SCF. Depending on the cellular context, the MAPK/ERK cascade mediates diverse biological functions such as cell growth, adhesion, survival and differentiation through the regulation of transcription, translation, cytoskeletal rearrangements. The MAPK/ERK cascade also plays a role in initiation and regulation of meiosis, mitosis, and postmitotic functions in differentiated cells by phosphorylating a number of transcription factors. About 160 substrates have already been discovered for ERKs. Many of these substrates are localized in the nucleus, and seem to participate in the regulation of transcription upon stimulation. However, other substrates are found in the cytosol as well as in other cellular organelles, and those are responsible for processes such as translation, mitosis and apoptosis. Moreover, the MAPK/ERK cascade is also involved in the regulation of the endosomal dynamics, including lysosome processing and endosome cycling through the perinuclear recycling compartment (PNRC); as well as in the fragmentation of the Golgi apparatus during mitosis. The substrates include transcription factors (such as ATF2, BCL6, ELK1, ERF, FOS, HSF4 or SPZ1), cytoskeletal elements (such as CANX, CTTN, GJA1, MAP2, MAPT, PXN, SORBS3 or STMN1), regulators of apoptosis (such as BAD, BTG2, CASP9, DAPK1, IER3, MCL1 or PPARG), regulators of translation (such as EIF4EBP1 and FXR1) and a variety of other signaling-related molecules (like ARHGEF2, DCC, FRS2 or GRB10). Protein kinases (such as RAF1, RPS6KA1/RSK1, RPS6KA3/RSK2, RPS6KA2/RSK3, RPS6KA6/RSK4, SYK, MKNK1/MNK1, MKNK2/MNK2, RPS6KA5/MSK1, RPS6KA4/MSK2, MAPKAPK3 or MAPKAPK5) and phosphatases (such as DUSP1, DUSP4, DUSP6 or DUSP16) are other substrates which enable the propagation the MAPK/ERK signal to additional cytosolic and nuclear targets, thereby extending the specificity of the cascade. Mediates phosphorylation of TPR in response to EGF stimulation. May play a role in the spindle assembly checkpoint. Phosphorylates PML and promotes its interaction with PIN1, leading to PML degradation. Phosphorylates CDK2AP2. Phosphorylates phosphoglycerate kinase PGK1 under hypoxic conditions to promote its targeting to the mitochondrion and suppress the formation of acetyl-coenzyme A from pyruvate. Functionally, acts as a transcriptional repressor. Binds to a [GC]AAA[GC] consensus sequence. Repress the expression of interferon gamma-induced genes. Seems to bind to the promoter of CCL5, DMP1, IFIH1, IFITM1, IRF7, IRF9, LAMP3, OAS1, OAS2, OAS3 and STAT1. Transcriptional activity is independent of kinase activity. In Bos taurus (Bovine), this protein is Mitogen-activated protein kinase 1.